The sequence spans 312 residues: MQRGRRKPDWLKSRPPSGSRFTEIKERLRERDLHTVCEEANCPNMGECWSGRDGPGTATFMLMGDRCSRGCNFCDVETGGMKSLDSDEPENVADAVAEIGLDYVVLTSVDRDDLADGGSEHFAETIREIQRRDPEILVETLIPDFQGDPEAIDRIIDAGPDVIAHNVETVERLQWPVRDRRADYEQSLAVLDRVGRESDIHTKTSLMLGVGEYDHEVYRTLGDLSEVGVDVVTFGQYLQPSRSHLDVFEYVHPDVFETWRAVAEREFDFLYCASGPMVRSSYKAGELFVEALLREGRSPEDARRHARAAGGD.

C37, C42, C48, C67, C71, C74, and S281 together coordinate [4Fe-4S] cluster. Residues 52–270 (RDGPGTATFM…AVAEREFDFL (219 aa)) enclose the Radical SAM core domain.

The protein belongs to the radical SAM superfamily. Lipoyl synthase family. [4Fe-4S] cluster is required as a cofactor.

It is found in the cytoplasm. The enzyme catalyses [[Fe-S] cluster scaffold protein carrying a second [4Fe-4S](2+) cluster] + N(6)-octanoyl-L-lysyl-[protein] + 2 oxidized [2Fe-2S]-[ferredoxin] + 2 S-adenosyl-L-methionine + 4 H(+) = [[Fe-S] cluster scaffold protein] + N(6)-[(R)-dihydrolipoyl]-L-lysyl-[protein] + 4 Fe(3+) + 2 hydrogen sulfide + 2 5'-deoxyadenosine + 2 L-methionine + 2 reduced [2Fe-2S]-[ferredoxin]. It participates in protein modification; protein lipoylation via endogenous pathway; protein N(6)-(lipoyl)lysine from octanoyl-[acyl-carrier-protein]: step 2/2. Functionally, catalyzes the radical-mediated insertion of two sulfur atoms into the C-6 and C-8 positions of the octanoyl moiety bound to the lipoyl domains of lipoate-dependent enzymes, thereby converting the octanoylated domains into lipoylated derivatives. This is Lipoyl synthase from Halorubrum lacusprofundi (strain ATCC 49239 / DSM 5036 / JCM 8891 / ACAM 34).